Here is a 301-residue protein sequence, read N- to C-terminus: Probable alpha-L-glutamate ligase (301 aa).

Residues 104–287 (LQLMSRKGLG…VASMIIKHIE (184 aa)) enclose the ATP-grasp domain. ATP-binding positions include Lys-141, 178–179 (EY), Asp-187, and 211–213 (RSN). 3 residues coordinate Mg(2+): Asp-248, Glu-260, and Asn-262. Residues Asp-248, Glu-260, and Asn-262 each coordinate Mn(2+).

This sequence belongs to the RimK family. It depends on Mg(2+) as a cofactor. The cofactor is Mn(2+).

The sequence is that of Probable alpha-L-glutamate ligase from Marinomonas sp. (strain MWYL1).